Consider the following 565-residue polypeptide: uncharacterized protein (565 aa).

This is an uncharacterized protein from Acanthamoeba polyphaga (Amoeba).